Consider the following 337-residue polypeptide: Tetraacyldisaccharide 4'-kinase (337 aa).

55 to 62 (TAGGNGKT) serves as a coordination point for ATP.

It belongs to the LpxK family.

It catalyses the reaction a lipid A disaccharide + ATP = a lipid IVA + ADP + H(+). It participates in glycolipid biosynthesis; lipid IV(A) biosynthesis; lipid IV(A) from (3R)-3-hydroxytetradecanoyl-[acyl-carrier-protein] and UDP-N-acetyl-alpha-D-glucosamine: step 6/6. In terms of biological role, transfers the gamma-phosphate of ATP to the 4'-position of a tetraacyldisaccharide 1-phosphate intermediate (termed DS-1-P) to form tetraacyldisaccharide 1,4'-bis-phosphate (lipid IVA). This is Tetraacyldisaccharide 4'-kinase from Sodalis glossinidius (strain morsitans).